We begin with the raw amino-acid sequence, 414 residues long: NFATC2-interacting protein (414 aa).

A disordered region spans residues 1 to 42; the sequence is MAEPLRRRGPRSRGGRASRGARRARAARGRCPRAPRSPTRLI. Over residues 7–33 the composition is skewed to basic residues; that stretch reads RRGPRSRGGRASRGARRARAARGRCPR. Phosphoserine occurs at positions 52 and 54. The segment at 63 to 118 is disordered; it reads ADPGEVPVARLPAPAAPEQDSDSDSEGAAEGPAGAPRTLVRRRRRLLDPGEAPVVP. Positions 68-79 are enriched in low complexity; the sequence is VPVARLPAPAAP. S83, S85, and S87 each carry phosphoserine. Over residues 90–100 the composition is skewed to low complexity; sequence AAEGPAGAPRT. Phosphoserine is present on S121. K123 participates in a covalent cross-link: Glycyl lysine isopeptide (Lys-Gly) (interchain with G-Cter in SUMO2). The interval 139 to 208 is disordered; sequence KLCPSEPEDE…SSRNKSRKHT (70 aa). Positions 170-229 form a coiled coil; the sequence is KKKLRKKHEKEEKKMEEFPDQDISPLPQPSSRNKSRKHTEALQKLREVNKRLQDLRSCLS. Phosphoserine occurs at positions 193, 199, and 309. Residues T311 and T313 each carry the phosphothreonine modification. The Ubiquitin-like domain occupies 343–414; it reads LRLRVQGKEK…ESGDLIEVWG (72 aa). 2 positions are modified to phosphoserine: S364 and S385.

Interacts with NFATC2, TRAF1, TRAF2 and PRMT1. Interacts with UBE2I/UBC9. In terms of processing, methylation at the N-terminus by PRMT1 modulates interaction with the NFAT complex and results in augmented cytokine production.

Its subcellular location is the nucleus. The protein localises to the cytoplasm. In terms of biological role, in T-helper 2 (Th2) cells, regulates the magnitude of NFAT-driven transcription of a specific subset of cytokine genes, including IL3, IL4, IL5 and IL13, but not IL2. Recruits PRMT1 to the IL4 promoter; this leads to enhancement of histone H4 'Arg-3'-methylation and facilitates subsequent histone acetylation at the IL4 locus, thus promotes robust cytokine expression. Down-regulates formation of poly-SUMO chains by UBE2I/UBC9. In Rattus norvegicus (Rat), this protein is NFATC2-interacting protein (Nfatc2ip).